Reading from the N-terminus, the 213-residue chain is DELTA-actitoxin-Aas1a (213 aa).

An N-terminal signal peptide occupies residues M1–A19. The propeptide occupies L20–R34. Residues A37–G46 are plays an important role in the hemolytic activity. The segment at G45 to N64 is N-terminal region. 7 residues coordinate phosphocholine: S88, V121, S139, P141, Y167, Y171, and Y172. Residues S139–K154 are trp-rich region, which is important for the binding to lipid membrane. Positions K178–D180 match the Cell attachment site, crucial for protein stability motif.

It belongs to the actinoporin family. Sea anemone subfamily. In terms of assembly, octamer or nonamer in membranes. Monomer in the soluble state.

It is found in the secreted. The protein resides in the nematocyst. It localises to the target cell membrane. Pore-forming protein that forms cation-selective hydrophilic pores of around 1 nm and causes cytolysis. Pore formation is a multi-step process that involves specific recognition of membrane sphingomyelin (but neither cholesterol nor phosphatidylcholine) using aromatic rich region and adjacent phosphocholine (POC) binding site, firm binding to the membrane (mainly driven by hydrophobic interactions) accompanied by the transfer of the N-terminal region to the lipid-water interface and finally pore formation after oligomerization of monomers. This protein shows potent hemolytic activity (EC(50)=8.8 ng/ml) that is specifically inhibited by sphingomyelin. Shows no phospholipase A2 activity, nor antimicrobial activity against the four bacteria tested. Is lethal to crayfish. This is DELTA-actitoxin-Aas1a from Anthopleura asiatica (Sea anemone).